We begin with the raw amino-acid sequence, 84 residues long: Envelope small membrane protein (84 aa).

At 1 to 18 (MFMADAYLADTVWYVGQI) the chain is on the virion surface side. The chain crosses the membrane as a helical span at residues 19-39 (IFIVAICLLVTIVVVAFLATF). Topologically, residues 40-80 (KLCIQLCGMCNTLVLSPSIYVFNRGRQFYEFYNDVKPPVLD) are intravirion.

It belongs to the betacoronaviruses E protein family. In terms of assembly, homopentamer. Interacts with membrane protein M in the budding compartment of the host cell, which is located between endoplasmic reticulum and the Golgi complex. Interacts with Nucleoprotein.

The protein resides in the host Golgi apparatus membrane. In terms of biological role, plays a central role in virus morphogenesis and assembly. Acts as a viroporin and self-assembles in host membranes forming pentameric protein-lipid pores that allow ion transport. Also plays a role in the induction of apoptosis. This Human coronavirus OC43 (HCoV-OC43) protein is Envelope small membrane protein.